The chain runs to 250 residues: GVQTSNASSPDFQLLVRASLQQLIPELASGVPSIGAEGVDPLRGLPPIVHNSNGFKVQLDDVSISGLSATLINDVNVDLTSNTIRIQATVPGYITATGIQTTDAEIMGIPLKGSGPFTISLANPSLAVTLTGAPSAGPNGQTYLRLTSASAAIEPGTPTADIKGFFPQFPPLEAAASAFASVVAPDVVQSLKPTLDKWLGGVALQRAQAVFSSVSYDALFPGRTPAAVGLYRAVPGLHTLPLPLSAFAYH.

As to expression, deposited in the epidermis and cuticle of male locusts during their sexual maturation.

Functionally, has beta-carotene-binding activity. May be involved in the transport of carotenes from internal tissues to epidermis and cuticle of the locust. This chain is Putative beta-carotene-binding protein, found in Schistocerca gregaria (Desert locust).